A 142-amino-acid polypeptide reads, in one-letter code: Hemoglobin subunit alpha (142 aa).

A Globin domain is found at 2 to 142 (VLSPADKTNV…VSTVLTSKYR (141 aa)). The residue at position 4 (S4) is a Phosphoserine. K8 bears the N6-succinyllysine mark. At T9 the chain carries Phosphothreonine. K12 carries the post-translational modification N6-succinyllysine. At K17 the chain carries N6-acetyllysine; alternate. An N6-succinyllysine; alternate modification is found at K17. Y25 is modified (phosphotyrosine). Phosphoserine is present on S36. K41 is modified (N6-succinyllysine). S50 carries the post-translational modification Phosphoserine. H59 is an O2 binding site. Position 88 (H88) interacts with heme b. At S103 the chain carries Phosphoserine. A Phosphothreonine modification is found at T109. The residue at position 125 (S125) is a Phosphoserine. Phosphothreonine is present on residues T135 and T138. S139 carries the post-translational modification Phosphoserine.

The protein belongs to the globin family. As to quaternary structure, heterotetramer of two alpha chains and two beta chains. In terms of tissue distribution, red blood cells.

In terms of biological role, involved in oxygen transport from the lung to the various peripheral tissues. Functionally, hemopressin acts as an antagonist peptide of the cannabinoid receptor CNR1. Hemopressin-binding efficiently blocks cannabinoid receptor CNR1 and subsequent signaling. The polypeptide is Hemoglobin subunit alpha (HBA) (Ailurus fulgens (Himalayan red panda)).